Reading from the N-terminus, the 426-residue chain is D-tagatose-1,6-bisphosphate aldolase subunit KbaZ (426 aa).

It belongs to the GatZ/KbaZ family. KbaZ subfamily. Forms a complex with KbaY.

Its pathway is carbohydrate metabolism; D-tagatose 6-phosphate degradation; D-glyceraldehyde 3-phosphate and glycerone phosphate from D-tagatose 6-phosphate: step 2/2. Component of the tagatose-1,6-bisphosphate aldolase KbaYZ that is required for full activity and stability of the Y subunit. Could have a chaperone-like function for the proper and stable folding of KbaY. When expressed alone, KbaZ does not show any aldolase activity. In Escherichia coli (strain K12 / MC4100 / BW2952), this protein is D-tagatose-1,6-bisphosphate aldolase subunit KbaZ.